Here is a 173-residue protein sequence, read N- to C-terminus: Lipoprotein signal peptidase (173 aa).

The next 3 membrane-spanning stretches (helical) occupy residues 11–31 (FGLIFAAVAFLLDQVTKWIVT), 69–89 (TTRWTLVAVTGIVAAAVAFWM), and 93–113 (QAKGDVIALALILGGALGNIV). Catalysis depends on residues Asp123 and Asp142. Residues 134-154 (PFMIFNVADACITIGVLLLVA) traverse the membrane as a helical segment.

Belongs to the peptidase A8 family.

It is found in the cell inner membrane. It carries out the reaction Release of signal peptides from bacterial membrane prolipoproteins. Hydrolyzes -Xaa-Yaa-Zaa-|-(S,diacylglyceryl)Cys-, in which Xaa is hydrophobic (preferably Leu), and Yaa (Ala or Ser) and Zaa (Gly or Ala) have small, neutral side chains.. It participates in protein modification; lipoprotein biosynthesis (signal peptide cleavage). This protein specifically catalyzes the removal of signal peptides from prolipoproteins. In Sphingopyxis alaskensis (strain DSM 13593 / LMG 18877 / RB2256) (Sphingomonas alaskensis), this protein is Lipoprotein signal peptidase.